Here is a 92-residue protein sequence, read N- to C-terminus: SPbeta prophage-derived DNA-binding protein HU 2 (92 aa).

T4 bears the Phosphothreonine mark. The interval 55 to 77 (RAARKGRNPQTGEEIDIPATKAP) is disordered.

It belongs to the bacterial histone-like protein family. Homodimer.

In terms of biological role, histone-like DNA-binding protein which is capable of wrapping DNA to stabilize it, and thus to prevent its denaturation under extreme environmental conditions. This Bacillus subtilis (strain 168) protein is SPbeta prophage-derived DNA-binding protein HU 2 (hup2).